Reading from the N-terminus, the 206-residue chain is Small ribosomal subunit protein uS4 (206 aa).

A disordered region spans residues 28–48; that stretch reads YMERRPYGPGEHGRARKKQDS. In terms of domain architecture, S4 RNA-binding spans 95–160; it reads MRLDALVLRA…MPPFQVAAAG (66 aa).

The protein belongs to the universal ribosomal protein uS4 family. As to quaternary structure, part of the 30S ribosomal subunit. Contacts protein S5. The interaction surface between S4 and S5 is involved in control of translational fidelity.

Its function is as follows. One of the primary rRNA binding proteins, it binds directly to 16S rRNA where it nucleates assembly of the body of the 30S subunit. With S5 and S12 plays an important role in translational accuracy. This is Small ribosomal subunit protein uS4 from Paenarthrobacter aurescens (strain TC1).